A 159-amino-acid polypeptide reads, in one-letter code: Ribosomal RNA large subunit methyltransferase H (159 aa).

Residues L76, G108, and 127–132 contribute to the S-adenosyl-L-methionine site; that span reads FSKMTF.

It belongs to the RNA methyltransferase RlmH family. Homodimer.

It localises to the cytoplasm. It carries out the reaction pseudouridine(1915) in 23S rRNA + S-adenosyl-L-methionine = N(3)-methylpseudouridine(1915) in 23S rRNA + S-adenosyl-L-homocysteine + H(+). Its function is as follows. Specifically methylates the pseudouridine at position 1915 (m3Psi1915) in 23S rRNA. The chain is Ribosomal RNA large subunit methyltransferase H from Bacillus subtilis (strain 168).